Here is a 433-residue protein sequence, read N- to C-terminus: Inositol hexakisphosphate kinase 1 (433 aa).

Residues 100 to 160 form a disordered region; the sequence is ETVEQDDTPE…SPKVELHSHS (61 aa). The span at 113–123 shows a compositional bias: basic residues; the sequence is PRRKHSRRSLH. Over residues 139–149 the composition is skewed to polar residues; sequence SFETSESSQET. Over residues 150–160 the composition is skewed to basic and acidic residues; sequence KSPKVELHSHS. Residue Ser-151 is modified to Phosphoserine. Residue 220–228 participates in substrate binding; sequence PCVLDLKMG. The disordered stretch occupies residues 362–383; the sequence is PLCGPSTSPSNTSLEAGPSSPP. Polar residues predominate over residues 366 to 375; that stretch reads PSTSPSNTSL.

This sequence belongs to the inositol phosphokinase (IPK) family.

The protein localises to the cytoplasm. The protein resides in the nucleus. It catalyses the reaction 1D-myo-inositol hexakisphosphate + ATP = 5-diphospho-1D-myo-inositol 1,2,3,4,6-pentakisphosphate + ADP. The enzyme catalyses 1-diphospho-1D-myo-inositol 2,3,4,5,6-pentakisphosphate + ATP + H(+) = 1,5-bis(diphospho)-1D-myo-inositol 2,3,4,6-tetrakisphosphate + ADP. Its function is as follows. Converts inositol hexakisphosphate (InsP6) to diphosphoinositol pentakisphosphate (InsP7/PP-InsP5). Converts 1,3,4,5,6-pentakisphosphate (InsP5) to PP-InsP4. This chain is Inositol hexakisphosphate kinase 1 (Ip6k1), found in Rattus norvegicus (Rat).